The primary structure comprises 328 residues: YDG domain-containing protein At5g47150 (328 aa).

The 145-residue stretch at 176–320 (GSVPGINIGD…KSVYKFKLCR (145 aa)) folds into the YDG domain.

The protein resides in the nucleus. This chain is YDG domain-containing protein At5g47150, found in Arabidopsis thaliana (Mouse-ear cress).